Reading from the N-terminus, the 410-residue chain is MASTTVCSAARIRVASSQVLRSIANTRTYATTSPESSIPETKPTAKRTPTTFKDKLNKGPSFSDFIGGATEPPLSPDEAYALKTALVGPAGKKKEITRLPSWLKTPIPDSSSYKKIKNDLRGLNLHTVCEEARCPNISECWGGGSKAAATATIMLMGDTCTRGCRFCSVKTSRTPPPLDPHEPENTAEALSRWGLGYVVLTAVDRDDLVDGGARHFAETVRRIKGKAPNILVECLTGDFSGDMEMVSLMAESGMDVFAHNVETVEALTPFVRDRRASFQQSLSVLRGAKAANPELITKTSLMLGLGETKEQVLDALKQLRASQVDVVTFGQYMRPTKRHMAVHEYVRPDVFDMWKEKAMEMGFLYCASGPLVRSSYKAGEAFIENVLKKRAKERIGGAVEDSVKGKDVLL.

The transit peptide at 1 to 29 directs the protein to the mitochondrion; the sequence is MASTTVCSAARIRVASSQVLRSIANTRTY. The segment covering 29-39 has biased composition (polar residues); sequence YATTSPESSIP. Residues 29–49 form a disordered region; that stretch reads YATTSPESSIPETKPTAKRTP. Positions 129, 134, 140, 160, 164, 167, and 375 each coordinate [4Fe-4S] cluster. Residues 143–364 form the Radical SAM core domain; sequence GGSKAAATAT…KEKAMEMGFL (222 aa).

The protein belongs to the radical SAM superfamily. Lipoyl synthase family. The cofactor is [4Fe-4S] cluster.

It localises to the mitochondrion. The enzyme catalyses [[Fe-S] cluster scaffold protein carrying a second [4Fe-4S](2+) cluster] + N(6)-octanoyl-L-lysyl-[protein] + 2 oxidized [2Fe-2S]-[ferredoxin] + 2 S-adenosyl-L-methionine + 4 H(+) = [[Fe-S] cluster scaffold protein] + N(6)-[(R)-dihydrolipoyl]-L-lysyl-[protein] + 4 Fe(3+) + 2 hydrogen sulfide + 2 5'-deoxyadenosine + 2 L-methionine + 2 reduced [2Fe-2S]-[ferredoxin]. It participates in protein modification; protein lipoylation via endogenous pathway; protein N(6)-(lipoyl)lysine from octanoyl-[acyl-carrier-protein]: step 2/2. Functionally, catalyzes the radical-mediated insertion of two sulfur atoms into the C-6 and C-8 positions of the octanoyl moiety bound to the lipoyl domains of lipoate-dependent enzymes, thereby converting the octanoylated domains into lipoylated derivatives. The protein is Lipoyl synthase, mitochondrial of Arthroderma otae (strain ATCC MYA-4605 / CBS 113480) (Microsporum canis).